The sequence spans 219 residues: Ribose-5-phosphate isomerase A (219 aa).

Substrate-binding positions include 28 to 31 (SGST), 81 to 84 (DGAD), and 94 to 97 (KGGG). Glu-103 functions as the Proton acceptor in the catalytic mechanism. A substrate-binding site is contributed by Lys-121.

It belongs to the ribose 5-phosphate isomerase family. Homodimer.

The enzyme catalyses aldehydo-D-ribose 5-phosphate = D-ribulose 5-phosphate. It functions in the pathway carbohydrate degradation; pentose phosphate pathway; D-ribose 5-phosphate from D-ribulose 5-phosphate (non-oxidative stage): step 1/1. In terms of biological role, catalyzes the reversible conversion of ribose-5-phosphate to ribulose 5-phosphate. This chain is Ribose-5-phosphate isomerase A, found in Histophilus somni (strain 129Pt) (Haemophilus somnus).